A 474-amino-acid chain; its full sequence is tRNA-2-methylthio-N(6)-dimethylallyladenosine synthase (474 aa).

The region spanning 3–120 (QKLHIKTWGC…LPEMINQIRG (118 aa)) is the MTTase N-terminal domain. The [4Fe-4S] cluster site is built by Cys-12, Cys-49, Cys-83, Cys-157, Cys-161, and Cys-164. Positions 143 to 375 (RAEGPTAFVS…QERINQQAAQ (233 aa)) constitute a Radical SAM core domain. Residues 378–441 (RRMLGTEQRV…TNSLRGEVVR (64 aa)) enclose the TRAM domain.

It belongs to the methylthiotransferase family. MiaB subfamily. In terms of assembly, monomer. Requires [4Fe-4S] cluster as cofactor.

The protein localises to the cytoplasm. It catalyses the reaction N(6)-dimethylallyladenosine(37) in tRNA + (sulfur carrier)-SH + AH2 + 2 S-adenosyl-L-methionine = 2-methylsulfanyl-N(6)-dimethylallyladenosine(37) in tRNA + (sulfur carrier)-H + 5'-deoxyadenosine + L-methionine + A + S-adenosyl-L-homocysteine + 2 H(+). Functionally, catalyzes the methylthiolation of N6-(dimethylallyl)adenosine (i(6)A), leading to the formation of 2-methylthio-N6-(dimethylallyl)adenosine (ms(2)i(6)A) at position 37 in tRNAs that read codons beginning with uridine. This Haemophilus influenzae (strain PittEE) protein is tRNA-2-methylthio-N(6)-dimethylallyladenosine synthase.